Reading from the N-terminus, the 291-residue chain is MFNKIGIFGKYSGIQSWDLIDKLILYFQKKKKTVILDQRSCADFPIERYGIERLERDALMKEIDFAVVVGGDGTFLDVARCIVDYNIPILGVNLGRLGFLADVSPDTMMVTLDEVLADDYTCEERTLLHVLIKKDGETLFDEVAFNDVVLHKNDSPRMIEFETFVDNRFLNSQRSDGLIIATPTGSTAYSLSAGGPIVDPGLNAMTLVSINPHTMSNRPVVVSGDSEILIRPHDNCSGTASIICDGQLTFQIEAKHETYVTRHPNFIKMVHPKNHDHYELLRAKLNWGQKL.

The active-site Proton acceptor is the aspartate 72. NAD(+) contacts are provided by residues aspartate 72–glycine 73, asparagine 146–aspartate 147, arginine 157, arginine 174, aspartate 176, threonine 187–serine 192, and glutamine 247.

It belongs to the NAD kinase family. It depends on a divalent metal cation as a cofactor.

The protein localises to the cytoplasm. It catalyses the reaction NAD(+) + ATP = ADP + NADP(+) + H(+). In terms of biological role, involved in the regulation of the intracellular balance of NAD and NADP, and is a key enzyme in the biosynthesis of NADP. Catalyzes specifically the phosphorylation on 2'-hydroxyl of the adenosine moiety of NAD to yield NADP. This is NAD kinase from Hydrogenovibrio crunogenus (strain DSM 25203 / XCL-2) (Thiomicrospira crunogena).